Reading from the N-terminus, the 855-residue chain is Transcription factor gaf1 (855 aa).

Residues 72-112 (KNLTPNGDSNTLTPDTFSDPTAPSSAQSVPPTSSAETTADN) are compositionally biased toward polar residues. Disordered stretches follow at residues 72 to 126 (KNLT…PAYS), 149 to 184 (TSFD…ESQP), 229 to 287 (SHNL…GFPS), 412 to 483 (PNSN…DMFS), 602 to 643 (NKNA…TRTT), and 680 to 768 (KKRN…SQSM). Basic and acidic residues predominate over residues 149-168 (TSFDESTAKSKKRSIADSHF). Serine 150 is modified (phosphoserine). Composition is skewed to low complexity over residues 240–250 (PANSNNSASPN) and 428–444 (NSSK…DSNQ). Polar residues predominate over residues 445 to 476 (ENAESFNPSISSHNSAEWASGETTGHSSNSPL). Residues 614-623 (AEDKKGDANT) show a composition bias toward basic and acidic residues. Composition is skewed to low complexity over residues 625-643 (RANA…TRTT) and 707-717 (SKSSSAKSTAA). A GATA-type zinc finger spans residues 635-659 (CTNCQTRTTPLWRRSPDGQPLCNAC). A phosphoserine mark is found at serine 727 and serine 729. Residues 755-767 (QQQSSENESKSQS) are compositionally biased toward low complexity.

The protein localises to the nucleus. Functionally, transcriptional activator. The sequence is that of Transcription factor gaf1 (gaf1) from Schizosaccharomyces pombe (strain 972 / ATCC 24843) (Fission yeast).